Consider the following 122-residue polypeptide: Large ribosomal subunit protein uL18 (122 aa).

It belongs to the universal ribosomal protein uL18 family. Part of the 50S ribosomal subunit; part of the 5S rRNA/L5/L18/L25 subcomplex. Contacts the 5S and 23S rRNAs.

Its function is as follows. This is one of the proteins that bind and probably mediate the attachment of the 5S RNA into the large ribosomal subunit, where it forms part of the central protuberance. This is Large ribosomal subunit protein uL18 from Prochlorococcus marinus (strain MIT 9301).